A 427-amino-acid chain; its full sequence is Tyrosine--tRNA ligase (427 aa).

Tyrosine 39 provides a ligand contact to L-tyrosine. The short motif at 44–53 is the 'HIGH' region element; sequence PTSDSLHIGH. The L-tyrosine site is built by tyrosine 178 and glutamine 182. The short motif at 238–242 is the 'KMSKS' region element; that stretch reads KFGKT. Lysine 241 contacts ATP. Residues 360-417 form the S4 RNA-binding domain; the sequence is ITLQQALVESKLVVSRAQARELISSNSITVNSKKQLKTEYIFCATDRLYNRFTLLRRG.

This sequence belongs to the class-I aminoacyl-tRNA synthetase family. TyrS type 1 subfamily. In terms of assembly, homodimer.

It is found in the cytoplasm. It carries out the reaction tRNA(Tyr) + L-tyrosine + ATP = L-tyrosyl-tRNA(Tyr) + AMP + diphosphate + H(+). Functionally, catalyzes the attachment of tyrosine to tRNA(Tyr) in a two-step reaction: tyrosine is first activated by ATP to form Tyr-AMP and then transferred to the acceptor end of tRNA(Tyr). This is Tyrosine--tRNA ligase from Blochmanniella pennsylvanica (strain BPEN).